The primary structure comprises 224 residues: Response regulator protein GraR (224 aa).

One can recognise a Response regulatory domain in the interval 2–115 (QILLVEDDNT…VLIAKLQAIY (114 aa)). At D51 the chain carries 4-aspartylphosphate. Positions 126–224 (KRTLTWQDAV…KVGKGYMAHE (99 aa)) form a DNA-binding region, ompR/PhoB-type. Phosphothreonine is present on residues T128, T130, and T149.

As to quaternary structure, interacts with GraX. Phosphorylated by GraS. Phosphorylated by Stk1; phosphorylation increases the DNA-binding activity of GraR.

It is found in the cytoplasm. Its function is as follows. Member of the two-component regulatory system GraR/GraS involved in resistance against cationic antimicrobial peptides (CAMPs). Upon phosphorylation by GraS, functions as a transcription regulator by direct binding to promoter regions of target genes such as adhesins, exoproteins, transporters, toxins, and proteins involved in cell wall synthesis. Down-regulates the expression of many genes involved in RNA and amino acid synthesis or glycolysis. This chain is Response regulator protein GraR (graR), found in Staphylococcus aureus (strain MRSA252).